Reading from the N-terminus, the 508-residue chain is UDP-N-acetylmuramoyl-L-alanyl-D-glutamate--L-lysine ligase (508 aa).

Ser47 contributes to the UDP-N-acetyl-alpha-D-muramoyl-L-alanyl-D-glutamate binding site. Residue 124-130 (GTKGKTT) coordinates ATP. Residues 168–169 (TT), Ser195, and Arg203 contribute to the UDP-N-acetyl-alpha-D-muramoyl-L-alanyl-D-glutamate site. Residue Lys237 is modified to N6-carboxylysine. The L-lysine recognition motif motif lies at 425–428 (DDPA).

It belongs to the MurCDEF family. MurE subfamily. Carboxylation is probably crucial for Mg(2+) binding and, consequently, for the gamma-phosphate positioning of ATP.

It is found in the cytoplasm. The enzyme catalyses UDP-N-acetyl-alpha-D-muramoyl-L-alanyl-D-glutamate + L-lysine + ATP = UDP-N-acetyl-alpha-D-muramoyl-L-alanyl-gamma-D-glutamyl-L-lysine + ADP + phosphate + H(+). It functions in the pathway cell wall biogenesis; peptidoglycan biosynthesis. Its function is as follows. Catalyzes the addition of L-lysine to the nucleotide precursor UDP-N-acetylmuramoyl-L-alanyl-D-glutamate (UMAG) in the biosynthesis of bacterial cell-wall peptidoglycan. This Enterococcus faecalis (strain ATCC 700802 / V583) protein is UDP-N-acetylmuramoyl-L-alanyl-D-glutamate--L-lysine ligase.